A 312-amino-acid chain; its full sequence is Ribosomal RNA small subunit methyltransferase H (312 aa).

S-adenosyl-L-methionine contacts are provided by residues 33-35 (GGH), D53, F80, D102, and Q109.

Belongs to the methyltransferase superfamily. RsmH family.

The protein localises to the cytoplasm. It carries out the reaction cytidine(1402) in 16S rRNA + S-adenosyl-L-methionine = N(4)-methylcytidine(1402) in 16S rRNA + S-adenosyl-L-homocysteine + H(+). Functionally, specifically methylates the N4 position of cytidine in position 1402 (C1402) of 16S rRNA. The protein is Ribosomal RNA small subunit methyltransferase H of Heliobacterium mobile (Heliobacillus mobilis).